The primary structure comprises 59 residues: Large ribosomal subunit protein uL30 (59 aa).

Belongs to the universal ribosomal protein uL30 family. Part of the 50S ribosomal subunit.

The protein is Large ribosomal subunit protein uL30 of Herminiimonas arsenicoxydans.